We begin with the raw amino-acid sequence, 380 residues long: Alcohol dehydrogenase-like 4 (380 aa).

Residues Cys-47, Thr-49, His-70, Cys-100, Cys-103, Cys-106, Cys-114, and Cys-180 each coordinate Zn(2+). Positions 49 and 70 each coordinate an alcohol. Thr-49 serves as a coordination point for NAD(+). NAD(+) is bound by residues 205–210, Asp-229, Lys-234, 298–300, Phe-325, and Arg-375; these read GLGAVG and LGV.

This sequence belongs to the zinc-containing alcohol dehydrogenase family. Class-III subfamily. In terms of assembly, homodimer. Zn(2+) is required as a cofactor.

The protein resides in the cytoplasm. It catalyses the reaction a primary alcohol + NAD(+) = an aldehyde + NADH + H(+). It carries out the reaction a secondary alcohol + NAD(+) = a ketone + NADH + H(+). This is Alcohol dehydrogenase-like 4 from Arabidopsis thaliana (Mouse-ear cress).